The chain runs to 258 residues: Type II restriction enzyme HincII (258 aa).

The enzyme catalyses Endonucleolytic cleavage of DNA to give specific double-stranded fragments with terminal 5'-phosphates.. A P subtype restriction enzyme that recognizes the double-stranded sequence 5'-GTYRAC-3' and cleaves after Y-3. This is Type II restriction enzyme HincII (hincIIR) from Haemophilus influenzae.